Consider the following 368-residue polypeptide: Methionine import ATP-binding protein MetN (368 aa).

One can recognise an ABC transporter domain in the interval 5 to 260; that stretch reads IELNNLSVQF…PKEALTKQFI (256 aa). 41–48 contributes to the ATP binding site; that stretch reads GYSGAGKS.

This sequence belongs to the ABC transporter superfamily. Methionine importer (TC 3.A.1.24) family. The complex is composed of two ATP-binding proteins (MetN), two transmembrane proteins (MetI) and a solute-binding protein (MetQ).

The protein localises to the cell membrane. It catalyses the reaction L-methionine(out) + ATP + H2O = L-methionine(in) + ADP + phosphate + H(+). The enzyme catalyses D-methionine(out) + ATP + H2O = D-methionine(in) + ADP + phosphate + H(+). Part of the ABC transporter complex MetNIQ involved in methionine import. Responsible for energy coupling to the transport system. This chain is Methionine import ATP-binding protein MetN, found in Lactococcus lactis subsp. lactis (strain IL1403) (Streptococcus lactis).